The chain runs to 423 residues: Type II methyltransferase M.BamHI (423 aa).

The span at 397-414 shows a compositional bias: basic and acidic residues; that stretch reads DFRQDHEGNSKGDKKNEN. Residues 397–423 are disordered; the sequence is DFRQDHEGNSKGDKKNENNDQISLSLE.

Belongs to the N(4)/N(6)-methyltransferase family.

It carries out the reaction a 2'-deoxycytidine in DNA + S-adenosyl-L-methionine = an N(4)-methyl-2'-deoxycytidine in DNA + S-adenosyl-L-homocysteine + H(+). A beta subtype methylase, recognizes the double-stranded sequence 5'-GGATCC-3', methylates C-5 on both strands, and protects the DNA from cleavage by the BamHI endonuclease. This chain is Type II methyltransferase M.BamHI, found in Bacillus amyloliquefaciens (Bacillus velezensis).